An 87-amino-acid chain; its full sequence is Small ribosomal subunit protein bS18 (87 aa).

Belongs to the bacterial ribosomal protein bS18 family. Part of the 30S ribosomal subunit. Forms a tight heterodimer with protein bS6.

Functionally, binds as a heterodimer with protein bS6 to the central domain of the 16S rRNA, where it helps stabilize the platform of the 30S subunit. The protein is Small ribosomal subunit protein bS18 of Nitratidesulfovibrio vulgaris (strain DSM 19637 / Miyazaki F) (Desulfovibrio vulgaris).